The following is a 75-amino-acid chain: DNA-directed RNA polymerase subunit omega (75 aa).

It belongs to the RNA polymerase subunit omega family. In cyanobacteria the RNAP catalytic core is composed of 2 alpha, 1 beta, 1 beta', 1 gamma and 1 omega subunit. When a sigma factor is associated with the core the holoenzyme is formed, which can initiate transcription.

It catalyses the reaction RNA(n) + a ribonucleoside 5'-triphosphate = RNA(n+1) + diphosphate. Promotes RNA polymerase assembly. Latches the N- and C-terminal regions of the beta' subunit thereby facilitating its interaction with the beta and alpha subunits. The polypeptide is DNA-directed RNA polymerase subunit omega (Cyanothece sp. (strain PCC 7425 / ATCC 29141)).